Here is a 119-residue protein sequence, read N- to C-terminus: Large ribosomal subunit protein uL18 (119 aa).

Residues 1–10 are compositionally biased toward basic and acidic residues; the sequence is MKKIKEAEQR. The disordered stretch occupies residues 1–20; that stretch reads MKKIKEAEQRKLRRKKRIKD.

The protein belongs to the universal ribosomal protein uL18 family. In terms of assembly, part of the 50S ribosomal subunit; part of the 5S rRNA/L5/L18/L25 subcomplex. Contacts the 5S and 23S rRNAs.

Its function is as follows. This is one of the proteins that bind and probably mediate the attachment of the 5S RNA into the large ribosomal subunit, where it forms part of the central protuberance. The protein is Large ribosomal subunit protein uL18 of Borreliella burgdorferi (strain ATCC 35210 / DSM 4680 / CIP 102532 / B31) (Borrelia burgdorferi).